The chain runs to 147 residues: Cyclic di-AMP receptor B (147 aa).

The CBS domain maps to 18–78; sequence MIEADKVAHV…SIFGLERIEF (61 aa). Positions 23, 25, 46, 47, and 131 each coordinate 3',3'-c-di-AMP.

Homodimer. Forms a homodimer with a parallel, head-to-head assembly of the monomers. Under conditions of potassium starvation and corresponding low c-di-AMP levels, apo-DarB specifically interacts with the N-terminal region of the RelA. Under the same conditions, apo-DarB also specifically interacts with the C-terminal part of the pyruvate carboxylase.

Binds c-di-AMP. Binding of c-di-AMP to DarB inhibits the interaction with RelA and PYC. Involved in the c-di-AMP-dependent regulation of the bacterial stringent response. Modulates the activities of at least two enzymes under conditions of potassium limitation. Apo-DarB regulates the activity of the GTP pyrophosphokinase RelA by interacting directly with RelA, leading to stimulation of (p)ppGpp synthesis and induction of the stringent response. Apo-DarB also regulates pyruvate carboxylase (PYC) at two levels: directly at the protein level by binding to the enzyme and stimulating the synthesis of oxaloacetate and indirectly, by interaction with RelA, which leads to activation of the stringent response and to the increased expression of the pycA gene. Stimulation of these enzymes by DarB is prevented in the presence of cyclic di-AMP (c-di-AMP). In Bacillus subtilis (strain 168), this protein is Cyclic di-AMP receptor B.